Reading from the N-terminus, the 154-residue chain is Ribonuclease H (154 aa).

Positions methionine 1 to glutamate 141 constitute an RNase H type-1 domain. The Mg(2+) site is built by aspartate 9, glutamate 47, aspartate 69, and aspartate 133.

Belongs to the RNase H family. As to quaternary structure, monomer. Requires Mg(2+) as cofactor.

Its subcellular location is the cytoplasm. The enzyme catalyses Endonucleolytic cleavage to 5'-phosphomonoester.. In terms of biological role, endonuclease that specifically degrades the RNA of RNA-DNA hybrids. In Brucella anthropi (strain ATCC 49188 / DSM 6882 / CCUG 24695 / JCM 21032 / LMG 3331 / NBRC 15819 / NCTC 12168 / Alc 37) (Ochrobactrum anthropi), this protein is Ribonuclease H.